We begin with the raw amino-acid sequence, 212 residues long: Imidazole glycerol phosphate synthase subunit HisH (212 aa).

Residues 3-212 enclose the Glutamine amidotransferase type-1 domain; the sequence is TVAVIDYGMG…QNFIAWDGRW (210 aa). Cys81 (nucleophile) is an active-site residue. Residues His190 and Glu192 contribute to the active site.

As to quaternary structure, heterodimer of HisH and HisF.

It localises to the cytoplasm. It carries out the reaction 5-[(5-phospho-1-deoxy-D-ribulos-1-ylimino)methylamino]-1-(5-phospho-beta-D-ribosyl)imidazole-4-carboxamide + L-glutamine = D-erythro-1-(imidazol-4-yl)glycerol 3-phosphate + 5-amino-1-(5-phospho-beta-D-ribosyl)imidazole-4-carboxamide + L-glutamate + H(+). The enzyme catalyses L-glutamine + H2O = L-glutamate + NH4(+). The protein operates within amino-acid biosynthesis; L-histidine biosynthesis; L-histidine from 5-phospho-alpha-D-ribose 1-diphosphate: step 5/9. In terms of biological role, IGPS catalyzes the conversion of PRFAR and glutamine to IGP, AICAR and glutamate. The HisH subunit catalyzes the hydrolysis of glutamine to glutamate and ammonia as part of the synthesis of IGP and AICAR. The resulting ammonia molecule is channeled to the active site of HisF. This is Imidazole glycerol phosphate synthase subunit HisH from Pseudomonas putida (strain ATCC 47054 / DSM 6125 / CFBP 8728 / NCIMB 11950 / KT2440).